A 274-amino-acid chain; its full sequence is tRNA (mnm(5)s(2)U34)-methyltransferase, chloroplastic (274 aa).

The transit peptide at 1-50 directs the protein to the chloroplast; it reads MAAGFFQAEMSILSSTLARSYSLPIRKTLMTFDFRIAMQRNPCLRIRRSC. Asn-108, Asn-110, Asp-134, Gln-136, and His-166 together coordinate S-adenosyl-L-methionine.

It belongs to the methyltransferase superfamily. MnmM family.

Its subcellular location is the plastid. The protein localises to the chloroplast. The enzyme catalyses 5-aminomethyl-2-thiouridine(34) in tRNA + S-adenosyl-L-methionine = 5-methylaminomethyl-2-thiouridine(34) in tRNA + S-adenosyl-L-homocysteine + H(+). It participates in tRNA modification. Functionally, involved in the biosynthesis of 5-methylaminomethyl-2-thiouridine (mnm(5)s(2)U) at the wobble position (U34) in tRNA. Catalyzes the transfer of a methyl group from S-adenosyl-L-methionine to nm(5)s(2)U34 to form mnm(5)s(2)U34. The sequence is that of tRNA (mnm(5)s(2)U34)-methyltransferase, chloroplastic from Arabidopsis thaliana (Mouse-ear cress).